The sequence spans 909 residues: ABC transporter B family member 1 (909 aa).

The segment at 1–36 (MTKKNFNDEENESLLETYNKQQQKQSISTTNRSDQK) is disordered. Over residues 14–36 (LLETYNKQQQKQSISTTNRSDQK) the composition is skewed to polar residues. The chain crosses the membrane as a helical span at residues 85–105 (LFIQIVSLVILAGYLISINAL). A compositionally biased stretch (low complexity) spans 125–134 (TDSGSVSPTS). The interval 125–147 (TDSGSVSPTSTPSPTPTPTPSPT) is disordered. Over residues 135–145 (TPSPTPTPTPS) the composition is skewed to pro residues. Transmembrane regions (helical) follow at residues 182–202 (FSTF…LLLI), 206–226 (SFIY…YNVI), 275–295 (IIIV…VLHI), 347–367 (LPII…SLAM), 392–412 (LALV…SWLF), 480–500 (VILL…IVPV), 572–592 (GVFS…IVYV), and 607–627 (LTSF…ISSL). Positions 350–633 (ILAAMVALVF…ISSLMTDFLK (284 aa)) constitute an ABC transmembrane type-1 domain. The ABC transporter domain maps to 666–902 (IELKDVEFSY…TDGIYHNLVK (237 aa)). 701-708 (GPSGGGKS) provides a ligand contact to ATP.

The protein belongs to the ABC transporter superfamily. ABCB family.

Its subcellular location is the membrane. This chain is ABC transporter B family member 1 (abcB1), found in Dictyostelium discoideum (Social amoeba).